We begin with the raw amino-acid sequence, 267 residues long: Ribosomal RNA small subunit methyltransferase NEP1 (267 aa).

Positions 1–46 are disordered; the sequence is MSELKNGTTEPKKNETTQSDSKSKSTSTNKSSVPPASLVPVQPTAL. Residues 16 to 32 show a composition bias toward low complexity; sequence TTQSDSKSKSTSTNKSS. S-adenosyl-L-methionine contacts are provided by residues L195, G222, 227–229, and 242–247; these read GKD and LSDYPL.

The protein belongs to the class IV-like SAM-binding methyltransferase superfamily. RNA methyltransferase NEP1 family. In terms of assembly, homodimer.

It is found in the nucleus. The protein localises to the nucleolus. The catalysed reaction is a pseudouridine in rRNA + S-adenosyl-L-methionine = an N(1)-methylpseudouridine in rRNA + S-adenosyl-L-homocysteine + H(+). In terms of biological role, S-adenosyl-L-methionine-dependent pseudouridine N(1)-methyltransferase that methylates the pseudouridine corresponding to position 1189 (Psi1189) in S.cerevisiae 18S rRNA. Involved the biosynthesis of the hypermodified N1-methyl-N3-(3-amino-3-carboxypropyl) pseudouridine (m1acp3-Psi) conserved in eukaryotic 18S rRNA. Also has an essential role in 40S ribosomal subunit biogenesis independent on its methyltransferase activity, facilitating the incorporation of ribosomal protein S19 during the formation of pre-ribosomes. The chain is Ribosomal RNA small subunit methyltransferase NEP1 from Candida albicans (Yeast).